Reading from the N-terminus, the 161-residue chain is SsrA-binding protein (161 aa).

The protein belongs to the SmpB family.

The protein localises to the cytoplasm. Functionally, required for rescue of stalled ribosomes mediated by trans-translation. Binds to transfer-messenger RNA (tmRNA), required for stable association of tmRNA with ribosomes. tmRNA and SmpB together mimic tRNA shape, replacing the anticodon stem-loop with SmpB. tmRNA is encoded by the ssrA gene; the 2 termini fold to resemble tRNA(Ala) and it encodes a 'tag peptide', a short internal open reading frame. During trans-translation Ala-aminoacylated tmRNA acts like a tRNA, entering the A-site of stalled ribosomes, displacing the stalled mRNA. The ribosome then switches to translate the ORF on the tmRNA; the nascent peptide is terminated with the 'tag peptide' encoded by the tmRNA and targeted for degradation. The ribosome is freed to recommence translation, which seems to be the essential function of trans-translation. The polypeptide is SsrA-binding protein (Mycolicibacterium smegmatis (strain ATCC 700084 / mc(2)155) (Mycobacterium smegmatis)).